Consider the following 85-residue polypeptide: Small ribosomal subunit protein uS17 (85 aa).

It belongs to the universal ribosomal protein uS17 family. In terms of assembly, part of the 30S ribosomal subunit.

One of the primary rRNA binding proteins, it binds specifically to the 5'-end of 16S ribosomal RNA. This Agathobacter rectalis (strain ATCC 33656 / DSM 3377 / JCM 17463 / KCTC 5835 / VPI 0990) (Eubacterium rectale) protein is Small ribosomal subunit protein uS17.